A 71-amino-acid chain; its full sequence is Protein translocase subunit SecE (71 aa).

The helical transmembrane segment at 43-63 (VAGVGILAVGAIGFIIYVLLT) threads the bilayer.

Belongs to the SecE/SEC61-gamma family. In terms of assembly, component of the Sec protein translocase complex. Heterotrimer consisting of SecY (alpha), SecG (beta) and SecE (gamma) subunits. The heterotrimers can form oligomers, although 1 heterotrimer is thought to be able to translocate proteins. Interacts with the ribosome. May interact with SecDF, and other proteins may be involved.

The protein localises to the cell membrane. In terms of biological role, essential subunit of the Sec protein translocation channel SecYEG. Clamps together the 2 halves of SecY. May contact the channel plug during translocation. This Methanosarcina barkeri (strain Fusaro / DSM 804) protein is Protein translocase subunit SecE.